Consider the following 288-residue polypeptide: Homoserine kinase (288 aa).

79-89 (PPARGLGSSSA) lines the ATP pocket.

This sequence belongs to the GHMP kinase family. Homoserine kinase subfamily.

It is found in the cytoplasm. It catalyses the reaction L-homoserine + ATP = O-phospho-L-homoserine + ADP + H(+). It participates in amino-acid biosynthesis; L-threonine biosynthesis; L-threonine from L-aspartate: step 4/5. Its function is as follows. Catalyzes the ATP-dependent phosphorylation of L-homoserine to L-homoserine phosphate. In Listeria monocytogenes serovar 1/2a (strain ATCC BAA-679 / EGD-e), this protein is Homoserine kinase.